The sequence spans 120 residues: Large ribosomal subunit protein uL18 (120 aa).

This sequence belongs to the universal ribosomal protein uL18 family. As to quaternary structure, part of the 50S ribosomal subunit; part of the 5S rRNA/L5/L18/L25 subcomplex. Contacts the 5S and 23S rRNAs.

Its function is as follows. This is one of the proteins that bind and probably mediate the attachment of the 5S RNA into the large ribosomal subunit, where it forms part of the central protuberance. The polypeptide is Large ribosomal subunit protein uL18 (Rhodospirillum rubrum (strain ATCC 11170 / ATH 1.1.1 / DSM 467 / LMG 4362 / NCIMB 8255 / S1)).